A 568-amino-acid polypeptide reads, in one-letter code: AP2-like ethylene-responsive transcription factor PLT2 (568 aa).

Residues 151–171 (ASPAETSADNSSSTTNTSGGA) show a composition bias toward low complexity. A disordered region spans residues 151-173 (ASPAETSADNSSSTTNTSGGAIV). 2 consecutive DNA-binding regions (AP2/ERF) follow at residues 190–256 (IYRG…TNFP) and 292–350 (MYRG…TNFE). Residues 548 to 568 (WNSGESAQGSNPGGVFTMWNE) are disordered.

Belongs to the AP2/ERF transcription factor family. AP2 subfamily. Post-translationally, stabilized in root meristems by reactive oxygen species (ROS) mediated oxidative post-translational modification triggered by RGF1 hormone peptide in a RITF1-dependent manner. As to expression, expressed in roots, seedlings, flowers, and siliques. Also detected at low levels in leaves. In roots, specifically detected in the distal root meristem, including the QC. This tissue specificity is regulated by auxin gradient and depends on PIN proteins.

Its subcellular location is the nucleus. Probably acts as a transcriptional activator. Binds to the GCC-box pathogenesis-related promoter element. May be involved in the regulation of gene expression by stress factors and by components of stress signal transduction pathways. Master regulator of basal/root fate. Essential for root quiescent center (QC) and columella specification, stem cell activity, as well as for establishment of the stem cell niche during embryogenesis. Modulates the root polar auxin transport by regulating the distribution of PIN genes. Essential role in respecifying pattern and polarity in damaged roots. Direct target of the transcriptional corepressor TPL. Expression levels and patterns regulated post-transcriptionally by root meristem growth factors (RGFs). This Arabidopsis thaliana (Mouse-ear cress) protein is AP2-like ethylene-responsive transcription factor PLT2.